We begin with the raw amino-acid sequence, 72 residues long: Translation initiation factor IF-1 (72 aa).

Residues 1-72 (MAKSDVIEVE…SKGRITYRFK (72 aa)) form the S1-like domain.

The protein belongs to the IF-1 family. Component of the 30S ribosomal translation pre-initiation complex which assembles on the 30S ribosome in the order IF-2 and IF-3, IF-1 and N-formylmethionyl-tRNA(fMet); mRNA recruitment can occur at any time during PIC assembly.

Its subcellular location is the cytoplasm. In terms of biological role, one of the essential components for the initiation of protein synthesis. Stabilizes the binding of IF-2 and IF-3 on the 30S subunit to which N-formylmethionyl-tRNA(fMet) subsequently binds. Helps modulate mRNA selection, yielding the 30S pre-initiation complex (PIC). Upon addition of the 50S ribosomal subunit IF-1, IF-2 and IF-3 are released leaving the mature 70S translation initiation complex. This is Translation initiation factor IF-1 from Levilactobacillus brevis (strain ATCC 367 / BCRC 12310 / CIP 105137 / JCM 1170 / LMG 11437 / NCIMB 947 / NCTC 947) (Lactobacillus brevis).